Here is a 288-residue protein sequence, read N- to C-terminus: MAPQFLKALTVATALGATLATALPVQPKPTVWHTTTQVVVKTITKTATVHGTPGPDYTVPPAYTTPAAPTVPTDAPQQPSYTPVPSAPTPSSSSSYSAPAEPSSSSVPAPPPPPPTTTSTPAPEPTTSTTPPPPPPAMTTPPPPPPPPATKPPVVSIPPIGGGGSTYTGPCAAGSPCTGEITFYDGGLGACGTNIDTNGEDAIALPIELMGPLSNNNPYCGKQVQISYKGKTATATVKDKCAGCTGNNIDMTRFLFYKLIRFPVAFTNSSNSGVEADGRIHGVEWHFI.

Residues 1–20 form the signal peptide; the sequence is MAPQFLKALTVATALGATLA. 2 stretches are compositionally biased toward low complexity: residues 48-107 and 117-129; these read TVHG…SSSV and TTSTPAPEPTTST. The interval 48–161 is disordered; sequence TVHGTPGPDY…PPVVSIPPIG (114 aa). Pro residues predominate over residues 130–151; it reads TPPPPPPAMTTPPPPPPPPATK. Asparagine 268 is a glycosylation site (N-linked (GlcNAc...) asparagine).

It is found in the secreted. The protein is Allergen Asp f 7 homolog of Arthroderma benhamiae (strain ATCC MYA-4681 / CBS 112371) (Trichophyton mentagrophytes).